Reading from the N-terminus, the 367-residue chain is Glutamate 5-kinase (367 aa).

Position 10 (Lys10) interacts with ATP. Substrate is bound by residues Ser50, Asp137, and Asn149. ATP contacts are provided by residues 169–170 and 211–217; these read TD and TGGMGTK. Residues 275–353 form the PUA domain; sequence AGELTVDAGA…QQIDAILGYE (79 aa).

It belongs to the glutamate 5-kinase family.

Its subcellular location is the cytoplasm. It catalyses the reaction L-glutamate + ATP = L-glutamyl 5-phosphate + ADP. It participates in amino-acid biosynthesis; L-proline biosynthesis; L-glutamate 5-semialdehyde from L-glutamate: step 1/2. Catalyzes the transfer of a phosphate group to glutamate to form L-glutamate 5-phosphate. The protein is Glutamate 5-kinase of Klebsiella pneumoniae (strain 342).